Consider the following 1399-residue polypeptide: DNA-directed RNA polymerase subunit beta' (1399 aa).

Zn(2+)-binding residues include C71, C73, C86, and C89. The Mg(2+) site is built by D462, D464, and D466. Zn(2+) is bound by residues C810, C884, C891, and C894.

Belongs to the RNA polymerase beta' chain family. The RNAP catalytic core consists of 2 alpha, 1 beta, 1 beta' and 1 omega subunit. When a sigma factor is associated with the core the holoenzyme is formed, which can initiate transcription. Mg(2+) serves as cofactor. The cofactor is Zn(2+).

The enzyme catalyses RNA(n) + a ribonucleoside 5'-triphosphate = RNA(n+1) + diphosphate. Its function is as follows. DNA-dependent RNA polymerase catalyzes the transcription of DNA into RNA using the four ribonucleoside triphosphates as substrates. The protein is DNA-directed RNA polymerase subunit beta' of Chelativorans sp. (strain BNC1).